The sequence spans 201 residues: Oligoribonuclease (201 aa).

The region spanning 20–183 is the Exonuclease domain; it reads LVWLDMEMTG…ADIHESIDEL (164 aa). Tyrosine 141 is a catalytic residue.

This sequence belongs to the oligoribonuclease family.

It is found in the cytoplasm. 3'-to-5' exoribonuclease specific for small oligoribonucleotides. This is Oligoribonuclease from Burkholderia mallei (strain NCTC 10229).